The primary structure comprises 131 residues: MSWQAYVDEHLMCEIEGHHLTSAAIVGHDGAVWAQSTAFPQSKTEEMTNIMKDFDEPGFLAPTGLFLGPTKYMVIQGEPGAVIRGKKGSGGITVKKTGQAMVVGIYDEPMTPGQCNMVVERLGDYLLEQGL.

C13 and C115 form a disulfide bridge. The Involved in PIP2 interaction motif lies at 81–97 (AVIRGKKGSGGITVKKT). T111 bears the Phosphothreonine mark.

This sequence belongs to the profilin family. In terms of assembly, occurs in many kinds of cells as a complex with monomeric actin in a 1:1 ratio. Post-translationally, phosphorylated by MAP kinases.

It is found in the cytoplasm. Its subcellular location is the cytoskeleton. In terms of biological role, binds to actin and affects the structure of the cytoskeleton. At high concentrations, profilin prevents the polymerization of actin, whereas it enhances it at low concentrations. The sequence is that of Profilin-11 from Zea mays (Maize).